The primary structure comprises 157 residues: Protein Smg (157 aa).

It belongs to the Smg family.

The chain is Protein Smg from Pectobacterium carotovorum subsp. carotovorum (strain PC1).